The chain runs to 428 residues: MEISTPLDCAPALVGPLPRRNSRAAQIRWGDRVVHVGGDAPVCVQSMTNTDTSDAIGTAIQVKELARAGSELVRITVDTPAAAAAVPAIREQLDRMGVDVPLVGDFHYNGHKLLQDYPECAQALSKYRINPGNVGQGAKRDTQFAQMIEIACRYDKPVRIGVNWGSLDQDLLARIMDENAQRATPWDARAVMVEALITSAIQSAQKAEELGLPGSQIILSCKVSAVQDLIAVYRELARRCHYALHLGLTEAGMGSKGIVASTAALSVLLQEGIGDTIRISLTPEPGAPREKEVIVAQEILQTMGLRNFTPMVIACPGCGRTTSTVFQELAARIQSYLREQMPVWKEQYPGVEEMNVAVMGCIVNGPGESKHANIGISLPGTGESPAAPVFVDGVKVKTLRGERITEEFQAIVDEYVRTHYGAQTPATV.

The [4Fe-4S] cluster site is built by cysteine 315, cysteine 318, cysteine 361, and glutamate 368.

The protein belongs to the IspG family. [4Fe-4S] cluster serves as cofactor.

The catalysed reaction is (2E)-4-hydroxy-3-methylbut-2-enyl diphosphate + oxidized [flavodoxin] + H2O + 2 H(+) = 2-C-methyl-D-erythritol 2,4-cyclic diphosphate + reduced [flavodoxin]. Its pathway is isoprenoid biosynthesis; isopentenyl diphosphate biosynthesis via DXP pathway; isopentenyl diphosphate from 1-deoxy-D-xylulose 5-phosphate: step 5/6. Functionally, converts 2C-methyl-D-erythritol 2,4-cyclodiphosphate (ME-2,4cPP) into 1-hydroxy-2-methyl-2-(E)-butenyl 4-diphosphate. The polypeptide is 4-hydroxy-3-methylbut-2-en-1-yl diphosphate synthase (flavodoxin) (Ralstonia pickettii (strain 12J)).